Here is a 493-residue protein sequence, read N- to C-terminus: Glutamyl-tRNA(Gln) amidotransferase subunit A (493 aa).

Catalysis depends on charge relay system residues Lys79 and Ser159. Ser183 acts as the Acyl-ester intermediate in catalysis.

The protein belongs to the amidase family. GatA subfamily. Heterotrimer of A, B and C subunits.

It carries out the reaction L-glutamyl-tRNA(Gln) + L-glutamine + ATP + H2O = L-glutaminyl-tRNA(Gln) + L-glutamate + ADP + phosphate + H(+). Its function is as follows. Allows the formation of correctly charged Gln-tRNA(Gln) through the transamidation of misacylated Glu-tRNA(Gln) in organisms which lack glutaminyl-tRNA synthetase. The reaction takes place in the presence of glutamine and ATP through an activated gamma-phospho-Glu-tRNA(Gln). The protein is Glutamyl-tRNA(Gln) amidotransferase subunit A of Rhizobium etli (strain ATCC 51251 / DSM 11541 / JCM 21823 / NBRC 15573 / CFN 42).